Consider the following 113-residue polypeptide: Mini zinc finger protein 2 (113 aa).

Residues 24-83 form a ZF-HD dimerization-type; degenerate zinc finger; sequence YGECRRNHAASTGGHAVDGCREFIAAEDGGGGNSTSAVGVAAAALKCAACGCHRSFHRRV. The segment at 93–113 is disordered; that stretch reads DCASGDTSSSSPSSSSSLSSE. The segment covering 100–113 has biased composition (low complexity); that stretch reads SSSSPSSSSSLSSE.

As to quaternary structure, homo- and heterodimers.

It localises to the cytoplasm. Functionally, inhibits zinc finger homeodomain (ZHD) transcription factors, by interacting with them to prevent both their nuclear localization and their DNA-binding properties. The protein is Mini zinc finger protein 2 (MIF3) of Oryza sativa subsp. japonica (Rice).